Consider the following 93-residue polypeptide: Putative septation protein SpoVG (93 aa).

It belongs to the SpoVG family.

Functionally, could be involved in septation. This Alkaliphilus oremlandii (strain OhILAs) (Clostridium oremlandii (strain OhILAs)) protein is Putative septation protein SpoVG.